The sequence spans 134 residues: Submaxillary gland androgen-regulated protein 3A (134 aa).

An N-terminal signal peptide occupies residues 1-22 (MKSLTWILGLWALAACFTPGES). The segment at 19–134 (PGESQRGPRG…TDPALPTPAP (116 aa)) is disordered. 3 stretches are compositionally biased toward pro residues: residues 28-43 (GPYPPGPLAPPPPPCF), 50-85 (VPPPHPPPYGPGRFPPPLSPPYGPGRIPPSPPPPYG), and 94-119 (LPPPYGPGYPQPPSQPRPYPPGPPFF).

It belongs to the PROL1/PROL3 family.

The protein localises to the secreted. Functionally, may play a role in protection or detoxification. This is Submaxillary gland androgen-regulated protein 3A (SMR3A) from Homo sapiens (Human).